A 100-amino-acid chain; its full sequence is Aspartyl/glutamyl-tRNA(Asn/Gln) amidotransferase subunit C (100 aa).

It belongs to the GatC family. As to quaternary structure, heterotrimer of A, B and C subunits.

It carries out the reaction L-glutamyl-tRNA(Gln) + L-glutamine + ATP + H2O = L-glutaminyl-tRNA(Gln) + L-glutamate + ADP + phosphate + H(+). The enzyme catalyses L-aspartyl-tRNA(Asn) + L-glutamine + ATP + H2O = L-asparaginyl-tRNA(Asn) + L-glutamate + ADP + phosphate + 2 H(+). In terms of biological role, allows the formation of correctly charged Asn-tRNA(Asn) or Gln-tRNA(Gln) through the transamidation of misacylated Asp-tRNA(Asn) or Glu-tRNA(Gln) in organisms which lack either or both of asparaginyl-tRNA or glutaminyl-tRNA synthetases. The reaction takes place in the presence of glutamine and ATP through an activated phospho-Asp-tRNA(Asn) or phospho-Glu-tRNA(Gln). This Streptococcus equi subsp. zooepidemicus (strain MGCS10565) protein is Aspartyl/glutamyl-tRNA(Asn/Gln) amidotransferase subunit C.